A 491-amino-acid polypeptide reads, in one-letter code: Glutamyl-tRNA(Gln) amidotransferase subunit A (491 aa).

Catalysis depends on charge relay system residues Lys-79 and Ser-158. Ser-182 functions as the Acyl-ester intermediate in the catalytic mechanism.

This sequence belongs to the amidase family. GatA subfamily. Heterotrimer of A, B and C subunits.

It carries out the reaction L-glutamyl-tRNA(Gln) + L-glutamine + ATP + H2O = L-glutaminyl-tRNA(Gln) + L-glutamate + ADP + phosphate + H(+). In terms of biological role, allows the formation of correctly charged Gln-tRNA(Gln) through the transamidation of misacylated Glu-tRNA(Gln) in organisms which lack glutaminyl-tRNA synthetase. The reaction takes place in the presence of glutamine and ATP through an activated gamma-phospho-Glu-tRNA(Gln). The polypeptide is Glutamyl-tRNA(Gln) amidotransferase subunit A (Maricaulis maris (strain MCS10) (Caulobacter maris)).